A 253-amino-acid polypeptide reads, in one-letter code: 2,3-bisphosphoglycerate-dependent phosphoglycerate mutase (253 aa).

Substrate is bound by residues 12 to 19 (RHGESEWN), 25 to 26 (TG), R64, 91 to 94 (ERHY), K102, 118 to 119 (RR), and 187 to 188 (GN). H13 (tele-phosphohistidine intermediate) is an active-site residue. The active-site Proton donor/acceptor is the E91.

It belongs to the phosphoglycerate mutase family. BPG-dependent PGAM subfamily.

The catalysed reaction is (2R)-2-phosphoglycerate = (2R)-3-phosphoglycerate. Its pathway is carbohydrate degradation; glycolysis; pyruvate from D-glyceraldehyde 3-phosphate: step 3/5. Its function is as follows. Catalyzes the interconversion of 2-phosphoglycerate and 3-phosphoglycerate. The sequence is that of 2,3-bisphosphoglycerate-dependent phosphoglycerate mutase from Streptomyces griseus subsp. griseus (strain JCM 4626 / CBS 651.72 / NBRC 13350 / KCC S-0626 / ISP 5235).